Consider the following 142-residue polypeptide: Baculoviral IAP repeat-containing protein 5 (142 aa).

One copy of the BIR repeat lies at 18–88 (RVSTFKNWPF…KHSSGCAFLS (71 aa)). Ser-20 carries the post-translational modification Phosphoserine; by AURKC. Lys-23 is subject to N6-acetyllysine. Position 34 is a phosphothreonine; by CDK1 and CDK15 (Thr-34). Thr-48 carries the phosphothreonine modification. Zn(2+) contacts are provided by Cys-57, Cys-60, His-77, and Cys-84. Lys-90, Lys-110, Lys-112, and Lys-115 each carry N6-acetyllysine. Thr-117 is subject to Phosphothreonine; by AURKB. Lys-129 bears the N6-acetyllysine mark.

The protein belongs to the IAP family. In terms of assembly, monomer or homodimer. Exists as a homodimer in the apo state and as a monomer in the CPC-bound state. The monomer protects cells against apoptosis more efficiently than the dimer. Only the dimeric form is capable of enhancing tubulin stability in cells. When phosphorylated, interacts with LAMTOR5/HBXIP; the resulting complex binds pro-CASP9, as well as active CASP9, but much less efficiently. Component of the chromosomal passenger complex (CPC) composed of at least BIRC5/survivin, CDCA8/borealin, INCENP, AURKB or AURKC; in the complex forms a triple-helix bundle-based subcomplex with INCENP and CDCA8. Interacts with JTB. Interacts (via BIR domain) with histone H3 phosphorylated at 'Thr-3' (H3pT3). Interacts with EVI5. Interacts with GTP-bound RAN in both the S and M phases of the cell cycle. Interacts with USP9X. Interacts with tubulin. Interacts with BIRC2/c-IAP1. The acetylated form at Lys-129 interacts with STAT3. The monomeric form deacetylated at Lys-129 interacts with XPO1/CRM1. The monomeric form interacts with XIAP/BIRC4. Both the dimeric and monomeric form can interact with DIABLO/SMAC. Interacts with BIRC6/bruce. Interacts with FBXL7; this interaction facilitates the polyubiquitination and subsequent proteasomal degradation of BIRC5 by the SCF(FBXL7) E3 ubiquitin-protein ligase complex. Post-translationally, ubiquitinated by the Cul9-RING ubiquitin-protein ligase complex, leading to its degradation. Ubiquitination is required for centrosomal targeting. Deubiquitinated by USP35 or USP38; leading to stabilization. In terms of processing, acetylation at Lys-129 results in its homodimerization, while deacetylation promotes the formation of monomers which heterodimerize with XPO1/CRM1 which facilitates its nuclear export. The acetylated form represses STAT3 transactivation. The dynamic equilibrium between its acetylation and deacetylation at Lys-129 determines its interaction with XPO1/CRM1, its subsequent subcellular localization, and its ability to inhibit STAT3 transactivation. In vitro phosphorylation at Thr-117 by AURKB prevents interaction with INCENP and localization to mitotic chromosomes. Phosphorylation at Thr-48 by CK2 is critical for its mitotic and anti-apoptotic activities. Phosphorylation at Thr-34 by CDK15 is critical for its anti-apoptotic activity. Phosphorylation at Ser-20 by AURKC is critical for regulation of proper chromosome alignment and segregation, and possibly cytokinesis.

Its subcellular location is the cytoplasm. The protein localises to the nucleus. It localises to the chromosome. It is found in the centromere. The protein resides in the cytoskeleton. Its subcellular location is the spindle. The protein localises to the kinetochore. It localises to the midbody. Its function is as follows. Multitasking protein that has dual roles in promoting cell proliferation and preventing apoptosis. Component of a chromosome passage protein complex (CPC) which is essential for chromosome alignment and segregation during mitosis and cytokinesis. Acts as an important regulator of the localization of this complex; directs CPC movement to different locations from the inner centromere during prometaphase to midbody during cytokinesis and participates in the organization of the center spindle by associating with polymerized microtubules. Involved in the recruitment of CPC to centromeres during early mitosis via association with histone H3 phosphorylated at 'Thr-3' (H3pT3) during mitosis. The complex with RAN plays a role in mitotic spindle formation by serving as a physical scaffold to help deliver the RAN effector molecule TPX2 to microtubules. May counteract a default induction of apoptosis in G2/M phase. The acetylated form represses STAT3 transactivation of target gene promoters. May play a role in neoplasia. Inhibitor of CASP3 and CASP7. Essential for the maintenance of mitochondrial integrity and function. This chain is Baculoviral IAP repeat-containing protein 5 (BIRC5), found in Canis lupus familiaris (Dog).